Here is a 325-residue protein sequence, read N- to C-terminus: NADH-quinone oxidoreductase subunit H (325 aa).

The next 8 helical transmembrane spans lie at Ile11 to Phe31, Val81 to Val101, Ile114 to Gly134, Leu154 to Phe174, Val186 to Val206, Phe237 to Phe257, Leu265 to Ile285, and Ile304 to Ala324.

The protein belongs to the complex I subunit 1 family. As to quaternary structure, NDH-1 is composed of 13 different subunits. Subunits NuoA, H, J, K, L, M, N constitute the membrane sector of the complex.

The protein resides in the cell inner membrane. The enzyme catalyses a quinone + NADH + 5 H(+)(in) = a quinol + NAD(+) + 4 H(+)(out). NDH-1 shuttles electrons from NADH, via FMN and iron-sulfur (Fe-S) centers, to quinones in the respiratory chain. The immediate electron acceptor for the enzyme in this species is believed to be ubiquinone. Couples the redox reaction to proton translocation (for every two electrons transferred, four hydrogen ions are translocated across the cytoplasmic membrane), and thus conserves the redox energy in a proton gradient. This subunit may bind ubiquinone. This chain is NADH-quinone oxidoreductase subunit H, found in Escherichia coli O139:H28 (strain E24377A / ETEC).